A 451-amino-acid polypeptide reads, in one-letter code: POC1 centriolar protein homolog B (451 aa).

WD repeat units lie at residues 16–55, 58–99, 101–139, 142–181, 183–223, 226–265, and 268–307; these read GHKA…RAYR, GHKD…SEFK, HTAP…FLYS, RHTH…CVNN, SDSV…LLQH, VHSG…LIYT, and GHTG…LHCK. The residue at position 321 (Ser321) is a Phosphoserine. The segment at 372-394 is disordered; sequence PECSPTTTKKKTEDMSDLPSESQ. A coiled-coil region spans residues 404 to 443; sequence ALEHIMEQLNVLTQTVSILEQRLTLTEDKLKDCLENQQKL.

Belongs to the WD repeat POC1 family. In terms of assembly, interacts with POC1A. Interacts with FAM161A. Interacts with CEP44; the interaction is direct and recruits POC1B to centriolar microtubules. Forms a microtubule-associated complex with POC5, CETN2 and FAM161A. Interacts with CCDC15. Post-translationally, phosphorylated in mitotic cells that may be mediated by CDK1.

The protein resides in the cytoplasm. It localises to the cytoskeleton. The protein localises to the microtubule organizing center. It is found in the centrosome. Its subcellular location is the centriole. The protein resides in the cilium basal body. It localises to the spindle pole. Plays an important role in centriole assembly and/or stability and ciliogenesis. Involved in early steps of centriole duplication, as well as in the later steps of centriole length control. Acts in concert with POC1A to ensure centriole integrity and proper mitotic spindle formation. Required for primary cilia formation, ciliary length and also cell proliferation. Required for retinal integrity. Acts as a positive regulator of centriole elongation. This is POC1 centriolar protein homolog B (POC1B) from Pongo abelii (Sumatran orangutan).